The sequence spans 220 residues: Putative DNA repair glycosylase MJ1434 (220 aa).

4 residues coordinate [4Fe-4S] cluster: Cys202, Cys208, Cys211, and Cys217.

This sequence belongs to the Nth/MutY family. [4Fe-4S] cluster serves as cofactor.

This chain is Putative DNA repair glycosylase MJ1434, found in Methanocaldococcus jannaschii (strain ATCC 43067 / DSM 2661 / JAL-1 / JCM 10045 / NBRC 100440) (Methanococcus jannaschii).